We begin with the raw amino-acid sequence, 298 residues long: MSDIEEVVEEYEEEEQEEAAVEEEEDWREDEDEQEEAAEEDAEAEAETEETRAEEDEEEEEAKEAEDGPMEESKPKPRSFMPNLVPPKIPDGERVDFDDIHRKRMEKDLNELQALIEAHFENRKKEEEELVSLKDRIERRRAERAEQQRIRNEREKERQNRLAEERARREEEENRRKAEDEARKKKALSNMMHFGGYIQKQAQTERKSGKRQTEREKKKKILAERRKVLAIDHLNEDQLREKAKELWQSIYNLEAEKFDLQEKFKQQKYEINVLRNRINDNQKVSKTRGKAKVTGRWK.

Over residues 1 to 70 (MSDIEEVVEE…EAKEAEDGPM (70 aa)) the composition is skewed to acidic residues. Disordered stretches follow at residues 1 to 95 (MSDI…GERV) and 120 to 219 (FENR…EKKK). Ser-2 carries the post-translational modification N-acetylserine. Position 2 is a phosphoserine; by CK2 (Ser-2). Basic and acidic residues-rich tracts occupy residues 120–183 (FENR…DEAR) and 203–219 (QTER…EKKK). Phosphothreonine; by PKC/PRKCA is present on Thr-204. Ser-208 carries the phosphoserine; by PKC/PRKCA modification. Phosphothreonine; by PKC/PRKCA and RAF1 is present on Thr-213. Phosphothreonine; by PKC/PRKCA is present on Thr-294.

The protein belongs to the troponin T family. Phosphorylation at Thr-213 by PRKCA induces significant reduction in myofilament calcium sensitivity and actomyosin ATPase activity. In terms of tissue distribution, heart. The fetal heart shows a greater expression in the atrium than in the ventricle, while the adult heart shows a greater expression in the ventricle than in the atrium. Isoform 6 predominates in normal adult heart. Isoforms 1, 7 and 8 are expressed in fetal heart. Isoform 7 is also expressed in failing adult heart.

Its function is as follows. Troponin T is the tropomyosin-binding subunit of troponin, the thin filament regulatory complex which confers calcium-sensitivity to striated muscle actomyosin ATPase activity. This Homo sapiens (Human) protein is Troponin T, cardiac muscle (TNNT2).